The chain runs to 127 residues: MSLGKRLKEARQKAGYTQKEAAEKLNIGNNNLSNYERDYRDPDTDTLLKLSNLYNVSTDYLLGKDEVSKKNETDLLNKTINEAIQELKDEDTLLFMNDGEFDEETARLVKKALKNGIKFIDELKKKE.

The segment covering 1–12 (MSLGKRLKEARQ) has biased composition (basic and acidic residues). The interval 1–22 (MSLGKRLKEARQKAGYTQKEAA) is disordered. An HTH cro/C1-type domain is found at 7–61 (LKEARQKAGYTQKEAAEKLNIGNNNLSNYERDYRDPDTDTLLKLSNLYNVSTDYL). Positions 18–37 (QKEAAEKLNIGNNNLSNYER) form a DNA-binding region, H-T-H motif.

In Bacillus subtilis (strain 168), this protein is HTH-type transcriptional regulator ImmR (immR).